The following is a 550-amino-acid chain: MTNVVVSGEQLQEAFREVAVMVDSTVAITAGPRGKTVGINKPYGAPEITKDGYKVMKGIKPEKPLHAAITSIFAQSCFQCNDKVGDGTTTCSILTSNMIMEALKSIAAGNDRVSIKNGMQKAKDAVLEGITSMSRTIPLEKMDEVAQVAIISANGDKDIGNSIADAVKKVGKEGVITVEESKGSKELEVELTTGMQFDRGYLSPYFITSNEKMIVEFDDPYLLITEKKLSIIQPLLPILEAVVKSGKPLLIIAEDIEGEALSTLVINKLRGGLKVTAVKAPGFGDRRKEMLEDIAALTGAKYVIKDELGIKMEDLTLEDLGTAKNVKVTKDNTTIVSGSSDSDRVKARVEQIKSQIETSTSDYDKEKLRERLAKLSGGVAVLKVGGVTEVEVKERRDRVEDALHATRAAIEEGIVPGGGVALLYASSALDKLKGGSDEEQIGINIIKKVLSAPIKRLVKNAGLESAVIIDHLTKQNDKELIYNVEAMNYANAFTAGVIDPAKVVRIAFETAISVASVLITTESMIVDVPNKEENASSSMGAGGMGGMNGF.

ATP is bound by residues 29–32 (TAGP), lysine 50, 86–90 (DGTTT), glycine 418, and aspartate 499.

Belongs to the chaperonin (HSP60) family. In terms of assembly, forms a cylinder of 14 subunits composed of two heptameric rings stacked back-to-back. Interacts with the co-chaperonin GroES.

It is found in the cytoplasm. It carries out the reaction ATP + H2O + a folded polypeptide = ADP + phosphate + an unfolded polypeptide.. In terms of biological role, together with its co-chaperonin GroES, plays an essential role in assisting protein folding. The GroEL-GroES system forms a nano-cage that allows encapsulation of the non-native substrate proteins and provides a physical environment optimized to promote and accelerate protein folding. This Wolbachia sp. subsp. Brugia malayi (strain TRS) protein is Chaperonin GroEL.